The chain runs to 209 residues: Large ribosomal subunit protein uL3 (209 aa).

Gln150 carries the N5-methylglutamine modification.

The protein belongs to the universal ribosomal protein uL3 family. Part of the 50S ribosomal subunit. Forms a cluster with proteins L14 and L19. Methylated by PrmB.

In terms of biological role, one of the primary rRNA binding proteins, it binds directly near the 3'-end of the 23S rRNA, where it nucleates assembly of the 50S subunit. In Aliivibrio salmonicida (strain LFI1238) (Vibrio salmonicida (strain LFI1238)), this protein is Large ribosomal subunit protein uL3.